The primary structure comprises 143 residues: Beta/delta-urticatoxin-Uf2a (143 aa).

Positions 1–18 (MGAIVLVALMALVASSSA) are cleaved as a signal peptide. Positions 19–80 (FSDIEHNIMK…MMLSGRPQPN (62 aa)) are excised as a propeptide. Intrachain disulfides connect Cys-83-Cys-100, Cys-90-Cys-105, Cys-99-Cys-113, Cys-115-Cys-129, Cys-122-Cys-134, and Cys-128-Cys-142.

This sequence belongs to the urticatoxin-2 family. As to expression, expressed in trichomes, that are stiff epidermal hairs located on the surface of petioles and leaves.

Its subcellular location is the secreted. Functionally, plant defense neurotoxin that causes pain and systemic symptoms in mammals via modulation of voltage-gated sodium channels (Nav). Potent modulator of human Nav1.5/SCN5A (EC(50)=55 nM), Nav1.6/SCN8A (EC(50)=0.86 nM), and Nav1.7/SCN9A (EC(50)=208 nM), where it shifts the activation threshold to more negative potentials and delays fast inactivation. Also shifts the voltage-dependence of steady-state fast inactivation of Nav1.6/SCN8A, but not that of Nav1.5/SCN5A or Nav1.7/SCN9A. On Nav1.7/SCN9A, principally acts by binding to extracellular loops of domain IV (Nav site 3). Does not affect current response of the tetrodotoxin (TTX)-resistant Nav1.8/SCN10A sodium channel. In vivo, intraplantar injection into mice causes numerous dose-dependent, immediate, and long-lasting spontaneous pain behaviors, while no swelling is observed in the injected paw. At the highest doses tested, systemic symptoms including hypokinesia and hypersalivation are observed. The polypeptide is Beta/delta-urticatoxin-Uf2a (Urtica ferox (Tree nettle)).